A 181-amino-acid polypeptide reads, in one-letter code: Large ribosomal subunit protein eL18 (181 aa).

It belongs to the eukaryotic ribosomal protein eL18 family.

It is found in the cytoplasm. The sequence is that of Large ribosomal subunit protein eL18 (rpl18) from Dictyostelium discoideum (Social amoeba).